A 500-amino-acid chain; its full sequence is MTSALEKNRPSAAFAFDNSYAGLPQRFFAAQMPTQVAEPWLIKLNEPLAAELGLDVEALRRDGAAIFSGNLVPEGAQPLAMAYAGHQFGGFSPQLGDGRAILLGEVIDRSGRRFDIQLKGAGPTPFSRRGDGRAAIGPVLREYIISEAMFALGIPATRALAAVTTGEPVYREEVLPGAVFTRVATSHIRVGTFQYFAARGDTDGVRALTNYVIDRHYPALKEADNPYLALFEAVSERQAALIARWLHVGFIHGVMNTDNMTVSGETIDFGPCAFMDAYDPATVFSSIDQHGRYAYANQPGIGQWNLARLGETLLPLIDDEPDAAVDKANAVIRAYGERFQTHWLAGMREKIGLAREEDGDLELVQTLLSLMQAQGADFTLTFRRLSDLAGDEAAEPDFAASFREAEASRNWLSRWRERLSRDPQTAGARAAAMRKVNPAFIPRNHRVEQAIEAAVENGDFSLFEALLTVLARPYDDQPDFAPYREPPKPHERVLATFCGT.

ATP contacts are provided by Gly-96, Gly-98, Arg-99, Lys-119, Asp-131, Gly-132, Arg-182, and Arg-189. Asp-258 (proton acceptor) is an active-site residue. 2 residues coordinate Mg(2+): Asn-259 and Asp-268. Asp-268 contributes to the ATP binding site.

It belongs to the SELO family. Mg(2+) is required as a cofactor. It depends on Mn(2+) as a cofactor.

The catalysed reaction is L-seryl-[protein] + ATP = 3-O-(5'-adenylyl)-L-seryl-[protein] + diphosphate. The enzyme catalyses L-threonyl-[protein] + ATP = 3-O-(5'-adenylyl)-L-threonyl-[protein] + diphosphate. It carries out the reaction L-tyrosyl-[protein] + ATP = O-(5'-adenylyl)-L-tyrosyl-[protein] + diphosphate. It catalyses the reaction L-histidyl-[protein] + UTP = N(tele)-(5'-uridylyl)-L-histidyl-[protein] + diphosphate. The catalysed reaction is L-seryl-[protein] + UTP = O-(5'-uridylyl)-L-seryl-[protein] + diphosphate. The enzyme catalyses L-tyrosyl-[protein] + UTP = O-(5'-uridylyl)-L-tyrosyl-[protein] + diphosphate. Its function is as follows. Nucleotidyltransferase involved in the post-translational modification of proteins. It can catalyze the addition of adenosine monophosphate (AMP) or uridine monophosphate (UMP) to a protein, resulting in modifications known as AMPylation and UMPylation. This chain is Protein nucleotidyltransferase YdiU, found in Rhizobium etli (strain CIAT 652).